Reading from the N-terminus, the 122-residue chain is Large ribosomal subunit protein uL14 (122 aa).

This sequence belongs to the universal ribosomal protein uL14 family. In terms of assembly, part of the 50S ribosomal subunit. Forms a cluster with proteins L3 and L19. In the 70S ribosome, L14 and L19 interact and together make contacts with the 16S rRNA in bridges B5 and B8.

Binds to 23S rRNA. Forms part of two intersubunit bridges in the 70S ribosome. The polypeptide is Large ribosomal subunit protein uL14 (Thermodesulfovibrio yellowstonii (strain ATCC 51303 / DSM 11347 / YP87)).